We begin with the raw amino-acid sequence, 422 residues long: Oxysterol-binding protein 7 (422 aa).

Residues 283 to 313 (EAAPASSASKKEKKKEKKKAKHSKHTCSPSD) are disordered. Positions 293–307 (KEKKKEKKKAKHSKH) are enriched in basic residues. Residues 354–384 (MQAADQIKKEIEDEQRKRLQITKEEEKKERA) adopt a coiled-coil conformation. The disordered stretch occupies residues 402–422 (TLAPVSNSTSSTASDAASGSN). Low complexity predominate over residues 407–422 (SNSTSSTASDAASGSN).

It belongs to the OSBP family.

This is Oxysterol-binding protein 7 (osbG) from Dictyostelium discoideum (Social amoeba).